We begin with the raw amino-acid sequence, 376 residues long: MAPTEATRGGPADPAPAPEAHRGGHTEHADPAEHAAQFGAQERILTLVWGYISSEILDLATRLDLPDLMGTEERAAAELAASLDTDPVATLRLLRAFAALGLAEETGAGRFRLTPAGHRLRTDVPDSLHAFVRQGMGVFRQAWSHFDHSIRTGEPAFDQVFGTDFFSYLSERPELSGTFTSSMREATRTMSTALAKEEEYDFSSYGTVVDIGGADGSLLAAVLSAHPGVEGVVFDSPEGARDAAATLDAAGVGERGRVETGDFFTRVPGGGDLYVLKSILHDWSDARSADILRTVRAAMPAHARLLVVEVLLPDTVDSSAHPLGYLSDLYMLVNMGGRERSERDLRSLLSDTGFRTTRVRTPPGLTPFSLIEAAPV.

A disordered region spans residues 1–28 (MAPTEATRGGPADPAPAPEAHRGGHTEH). Basic and acidic residues predominate over residues 19-28 (EAHRGGHTEH). Residues Asp-235 and 261–263 (GDF) each bind S-adenosyl-L-methionine. His-281 functions as the Proton acceptor in the catalytic mechanism.

It belongs to the class I-like SAM-binding methyltransferase superfamily. Cation-independent O-methyltransferase family.

It catalyses the reaction O-demethylpuromycin + S-adenosyl-L-methionine = puromycin + S-adenosyl-L-homocysteine + H(+). In Streptomyces alboniger, this protein is O-demethylpuromycin-O-methyltransferase (dmpM).